The primary structure comprises 503 residues: T-complex protein 11 homolog (503 aa).

Residues Met-1–Lys-22 show a composition bias toward basic and acidic residues. Disordered regions lie at residues Met-1 to Phe-42 and Asp-254 to Pro-285. The span at Pro-263–Pro-285 shows a compositional bias: low complexity. The chain crosses the membrane as a helical span at residues Leu-330–Phe-349.

Belongs to the TCP11 family. In terms of assembly, found in a complex at least composed of MROH2B, PRKACA isoform 2 and TCP11. Interacts with MROH2B. Interacts with PRKACA isoform 2. Isoform 2 and isoform 3 interact with ODF1 (via leucine zipper motif). Post-translationally, constitutively phosphorylated on serine, threonine and tyrosine residues within the head and tail regions of noncapacitated spermatozoa. Phosphorylation on tyrosine residues increases upon sperm capacitation within the acrosomal region in a protein kinase A (PKA)-dependent signaling pathway. Isoform 2 and isoform 3 are expressed in sperm. Isoform 1 is not detected in sperm (at protein level). Testis-specific. Isoform 1, isoform 2 and isoform 3 are expressed in sperm.

It is found in the membrane. Its subcellular location is the cell projection. It localises to the cilium. The protein localises to the flagellum. The protein resides in the cytoplasmic vesicle. It is found in the secretory vesicle. Its subcellular location is the acrosome. Its function is as follows. Plays a role in the process of sperm capacitation and acrosome reactions. Probable receptor for the putative fertilization-promoting peptide (FPP) at the sperm membrane that may modulate the activity of the adenylyl cyclase cAMP pathway. The sequence is that of T-complex protein 11 homolog (TCP11) from Homo sapiens (Human).